Consider the following 254-residue polypeptide: 3-oxo-5-alpha-steroid 4-dehydrogenase 2 (254 aa).

Helical transmembrane passes span 8–28, 72–92, 146–166, and 206–226; these read VPVL…LCFG, PRSL…AHYF, FSVG…SDCM, and LATW…FLGM.

This sequence belongs to the steroid 5-alpha reductase family.

It is found in the microsome membrane. The protein localises to the endoplasmic reticulum membrane. The enzyme catalyses a 3-oxo-5alpha-steroid + NADP(+) = a 3-oxo-Delta(4)-steroid + NADPH + H(+). It carries out the reaction 17beta-hydroxy-5alpha-androstan-3-one + NADP(+) = testosterone + NADPH + H(+). It catalyses the reaction 5alpha-pregnane-3,20-dione + NADP(+) = progesterone + NADPH + H(+). Functionally, converts testosterone (T) into 5-alpha-dihydrotestosterone (DHT) and progesterone or corticosterone into their corresponding 5-alpha-3-oxosteroids. It plays a central role in sexual differentiation and androgen physiology. In Mus musculus (Mouse), this protein is 3-oxo-5-alpha-steroid 4-dehydrogenase 2 (Srd5a2).